A 221-amino-acid polypeptide reads, in one-letter code: Ethylene-inducing xylanase 4 (221 aa).

A signal peptide spans 1–19 (MVSFSTLLTACTAITGALG). The GH11 domain maps to 28–218 (NVTPNAQGTH…SAGRASVVVE (191 aa)). N-linked (GlcNAc...) asparagine glycosylation occurs at Asn96. Catalysis depends on Glu114, which acts as the Nucleophile. Glu205 acts as the Proton donor in catalysis.

This sequence belongs to the glycosyl hydrolase 11 (cellulase G) family.

The enzyme catalyses Endohydrolysis of (1-&gt;4)-beta-D-xylosidic linkages in xylans.. The protein operates within glycan degradation; xylan degradation. Endo-1,4-beta-xylanase involved in the hydrolysis of xylan, a major structural heterogeneous polysaccharide found in plant biomass representing the second most abundant polysaccharide in the biosphere, after cellulose. May act as an elicitor of plant defense responses in certain plants but does not exhibit any cell death when transiently expressed in N.benthamiana. The chain is Ethylene-inducing xylanase 4 from Verticillium dahliae (strain VdLs.17 / ATCC MYA-4575 / FGSC 10137) (Verticillium wilt).